A 343-amino-acid chain; its full sequence is MLFSLIRPAIHALDPERAHRFSIEALKLAPLPHSRHSDASLSVKVAGIRFPNPVGVAAGYDKDAEVPDALLGLGFGFVEVGSITPRPQEGNPKPRLFRLSRDRAVINRMGFNNAGADVAERRLRARAAKGGVIGINVGANKDSDDRIADYATMVRRMAPYASYLTANISSPNTPGLRALQDEGALTGLLDAVMEAPGADGPPVFLKVAPDLEPADVDAIARIAIDKGLGALIVSNTTIFRPDLQSRDRDETGGLSGAPLKPLALQRLRDFRSATGGAIPLVGVGGIATIDDAWERIRAGASLVQVYSAMVYEGPGLGRSIARGLSRKLREHGMASIEEAVGSE.

Residues 58–62 and serine 82 contribute to the FMN site; that span reads AGYDK. Lysine 62 is a substrate binding site. 107 to 111 contributes to the substrate binding site; the sequence is NRMGF. Residues asparagine 136 and asparagine 167 each contribute to the FMN site. Asparagine 167 lines the substrate pocket. Residue serine 170 is the Nucleophile of the active site. Asparagine 172 is a binding site for substrate. Positions 206 and 234 each coordinate FMN. Substrate is bound at residue 235–236; it reads NT. FMN-binding positions include glycine 256, glycine 285, and 306–307; that span reads YS.

This sequence belongs to the dihydroorotate dehydrogenase family. Type 2 subfamily. Monomer. FMN is required as a cofactor.

It is found in the cell membrane. The enzyme catalyses (S)-dihydroorotate + a quinone = orotate + a quinol. It participates in pyrimidine metabolism; UMP biosynthesis via de novo pathway; orotate from (S)-dihydroorotate (quinone route): step 1/1. In terms of biological role, catalyzes the conversion of dihydroorotate to orotate with quinone as electron acceptor. This is Dihydroorotate dehydrogenase (quinone) from Erythrobacter litoralis (strain HTCC2594).